The primary structure comprises 82 residues: ATP synthase subunit c, chloroplastic (82 aa).

2 consecutive transmembrane segments (helical) span residues A7–G27 and L57–A77.

Belongs to the ATPase C chain family. In terms of assembly, F-type ATPases have 2 components, F(1) - the catalytic core - and F(0) - the membrane proton channel. F(1) has five subunits: alpha(3), beta(3), gamma(1), delta(1), epsilon(1). F(0) has four main subunits: a(1), b(1), b'(1) and c(10-14). The alpha and beta chains form an alternating ring which encloses part of the gamma chain. F(1) is attached to F(0) by a central stalk formed by the gamma and epsilon chains, while a peripheral stalk is formed by the delta, b and b' chains.

Its subcellular location is the plastid. The protein resides in the chloroplast thylakoid membrane. F(1)F(0) ATP synthase produces ATP from ADP in the presence of a proton or sodium gradient. F-type ATPases consist of two structural domains, F(1) containing the extramembraneous catalytic core and F(0) containing the membrane proton channel, linked together by a central stalk and a peripheral stalk. During catalysis, ATP synthesis in the catalytic domain of F(1) is coupled via a rotary mechanism of the central stalk subunits to proton translocation. Its function is as follows. Key component of the F(0) channel; it plays a direct role in translocation across the membrane. A homomeric c-ring of between 10-14 subunits forms the central stalk rotor element with the F(1) delta and epsilon subunits. In Porphyra purpurea (Red seaweed), this protein is ATP synthase subunit c, chloroplastic.